A 344-amino-acid polypeptide reads, in one-letter code: AI-2 transport protein TqsA (344 aa).

Residues 1-4 (MAKP) lie on the Cytoplasmic side of the membrane. The chain crosses the membrane as a helical span at residues 5-25 (IITLNGLKIVIMLGMLVIILC). Over 26 to 30 (GIRFA) the chain is Periplasmic. The chain crosses the membrane as a helical span at residues 31-51 (AEIIVPFILALFIAVILNPLV). The Cytoplasmic portion of the chain corresponds to 52–61 (QHMVRWRVPR). A helical membrane pass occupies residues 62 to 82 (VLAVSILMTIIVMAMVLLLAY). At 83–149 (LGSALNELTR…LLTQLSNAMS (67 aa)) the chain is on the periplasmic side. Residues 150–170 (SIFLLLLTVLFMLLEVPQLPG) form a helical membrane-spanning segment. The Cytoplasmic segment spans residues 171 to 196 (KFQQMMARPVEGMAAIQRAIDSVSHY). Residues 197-217 (LVLKTAISIITGLVAWAMLAA) form a helical membrane-spanning segment. The Periplasmic portion of the chain corresponds to 218-221 (LDVR). A helical transmembrane segment spans residues 222-242 (FAFVWGLLAFALNYIPNIGSV). Over 243–257 (LAAIPPIAQVLVFNG) the chain is Cytoplasmic. The helical transmembrane segment at 258-278 (FYEALLVLAGYLLINLVFGNI) threads the bilayer. Residues 279–292 (LEPRIMGRGLGLST) lie on the Periplasmic side of the membrane. Residues 293 to 313 (LVVFLSLIFWGWLLGPVGMLL) form a helical membrane-spanning segment. At 314–344 (SVPLTIIVKIALEQTAGGQSIAVLLSDLNKE) the chain is on the cytoplasmic side.

This sequence belongs to the autoinducer-2 exporter (AI-2E) (TC 2.A.86) family.

It localises to the cell inner membrane. It carries out the reaction (2R,4S)-2-methyltetrahydrofuran-2,3,3,4-tetrol(in) = (2R,4S)-2-methyltetrahydrofuran-2,3,3,4-tetrol(out). Involved in the transport of the quorum-sensing signal autoinducer 2 (AI-2). Controls the transport of AI-2 either by enhancing its secretion or inhibiting its uptake and consequently represses biofilm formation and motility and affects the global gene expression in biofilms. The protein is AI-2 transport protein TqsA of Escherichia coli (strain K12).